We begin with the raw amino-acid sequence, 98 residues long: Parvalbumin beta 1 (98 aa).

Ser-1 carries the N-acetylserine modification. 2 consecutive EF-hand domains span residues 32–67 (KIGLAGKKVFAIIDQDKSDFVEEDELKLFLQVFSAG) and 67–98 (GARALTDAETKAGDSDGDGKIGVDEFAQMIKG). Ca(2+) is bound by residues Asp-45, Asp-47, Ser-49, Phe-51, Glu-53, Glu-56, Asp-80, Asp-82, Asp-84, Lys-86, and Glu-91.

It belongs to the parvalbumin family.

Its function is as follows. In muscle, parvalbumin is thought to be involved in relaxation after contraction. It binds two calcium ions. This chain is Parvalbumin beta 1, found in Macruronus magellanicus (Patagonian grenadier).